We begin with the raw amino-acid sequence, 278 residues long: Thioredoxin-related transmembrane protein 1 (278 aa).

An N-terminal signal peptide occupies residues 1–26 (MAPSGSLRIPVAVLLLLLWGAPWAHG). One can recognise a Thioredoxin domain in the interval 27–132 (KRSDVRIITD…FINFISDKEW (106 aa)). The Extracellular segment spans residues 27 to 180 (KRSDVRIITD…EDLGLPIWGS (154 aa)). Catalysis depends on nucleophile residues Cys-56 and Cys-59. A disulfide bridge links Cys-56 with Cys-59. A helical transmembrane segment spans residues 181–203 (YTVFALATLLSGLLLGLFMIFVA). The Cytoplasmic portion of the chain corresponds to 204–278 (DCLCPSKRRR…VGPSLATDKS (75 aa)). Residues Cys-205 and Cys-207 are each lipidated (S-palmitoyl cysteine). Residues 213–278 (RPQPYPSRKL…VGPSLATDKS (66 aa)) are disordered. Phosphoserine occurs at positions 226, 245, 268, 272, and 278. Residues 235–250 (EEQEADVEDVSEEESE) show a composition bias toward acidic residues.

Interacts with ATP2A2. Palmitoylated; palmitoylation is required for localization to mitochondria-associated endoplasmic reticulum membrane (MAM).

It localises to the endoplasmic reticulum membrane. The protein resides in the mitochondrion membrane. The protein localises to the secreted. The enzyme catalyses Catalyzes the rearrangement of -S-S- bonds in proteins.. Functionally, thiredoxin domain-containing protein that participates in various redox reactions through the reversible oxidation of its active center dithiol to a disulfide and catalyze dithiol-disulfide exchange reactions. Acts as a key inhibitor of the alternative triglyceride biosynthesis pathway by inhibiting the activity of TMEM68/DIESL at the endoplasmic reticulum, thereby restricting accumulation of triacylglycerol. The alternative triglyceride biosynthesis pathway mediates formation of triacylglycerol from diacylglycerol and membrane phospholipids. Acts as a protein disulfide isomerase by catalyzing formation or reduction of disulfide bonds. Specifically mediates formation of disulfide bonds of transmembrane proteins at the endoplasmic reticulum membrane. Involved in endoplasmic reticulum-associated degradation (ERAD) via its protein disulfide isomerase activity by acting on folding-defective polypeptides at the endoplasmic reticulum membrane. Acts as a negative regulator of platelet aggregation following secretion in the extracellular space. Acts as a regulator of endoplasmic reticulum-mitochondria contact sites via its ability to regulate redox signals. Regulates endoplasmic reticulum-mitochondria Ca(2+) flux. The protein is Thioredoxin-related transmembrane protein 1 (TMX1) of Bos taurus (Bovine).